Consider the following 308-residue polypeptide: NADH-cytochrome b5 reductase 1 (308 aa).

A helical transmembrane segment spans residues isoleucine 10–isoleucine 27. Positions threonine 59–threonine 164 constitute an FAD-binding FR-type domain. Residues threonine 144–glycine 159 and histidine 170–leucine 207 each bind FAD.

The protein belongs to the flavoprotein pyridine nucleotide cytochrome reductase family. In terms of assembly, monomer. Component of the 2-(3-amino-3-carboxypropyl)histidine synthase complex composed of DPH1, DPH2, DPH3 and a NADH-dependent reductase, predominantly CBR1. FAD is required as a cofactor.

It is found in the mitochondrion outer membrane. The catalysed reaction is 2 Fe(III)-[cytochrome b5] + NADH = 2 Fe(II)-[cytochrome b5] + NAD(+) + H(+). It carries out the reaction 2 Fe(3+)-[Dph3] + NADH = 2 Fe(2+)-[Dph3] + NAD(+) + H(+). Its pathway is protein modification; peptidyl-diphthamide biosynthesis. In terms of biological role, NADH-dependent reductase for DPH3 and cytochrome b5. Required for the first step of diphthamide biosynthesis, a post-translational modification of histidine which occurs in elongation factor 2. DPH1 and DPH2 transfer a 3-amino-3-carboxypropyl (ACP) group from S-adenosyl-L-methionine (SAM) to a histidine residue, the reaction is assisted by a reduction system comprising DPH3 and a NADH-dependent reductase, predominantly CBR1. By reducing DPH3, also involved in the formation of the tRNA wobble base modification mcm5s 2U (5-methoxycarbonylmethyl-2-thiouridine), mediated by the elongator complex. The cytochrome b5/NADH cytochrome b5 reductase electron transfer system supports the catalytic activity of several sterol biosynthetic enzymes. The protein is NADH-cytochrome b5 reductase 1 (CBR1) of Coccidioides immitis (strain RS) (Valley fever fungus).